Consider the following 465-residue polypeptide: GTPase Der (465 aa).

EngA-type G domains lie at 3 to 167 (PLVA…PEEG) and 179 to 352 (IRIA…ESAN). GTP contacts are provided by residues 9-16 (GRPNVGKS), 57-61 (DTGGI), 119-122 (NKID), 185-192 (GRPNVGKS), 232-236 (DTAGL), and 297-300 (NKWD). In terms of domain architecture, KH-like spans 353–437 (KTFTTSEVNK…PVSFIFREGT (85 aa)).

The protein belongs to the TRAFAC class TrmE-Era-EngA-EngB-Septin-like GTPase superfamily. EngA (Der) GTPase family. As to quaternary structure, associates with the 50S ribosomal subunit.

In terms of biological role, GTPase that plays an essential role in the late steps of ribosome biogenesis. In Stenotrophomonas maltophilia (strain K279a), this protein is GTPase Der.